The sequence spans 293 residues: Ribosomal protein L11 methyltransferase (293 aa).

S-adenosyl-L-methionine is bound by residues T145, G166, D188, and N230.

Belongs to the methyltransferase superfamily. PrmA family.

The protein resides in the cytoplasm. The catalysed reaction is L-lysyl-[protein] + 3 S-adenosyl-L-methionine = N(6),N(6),N(6)-trimethyl-L-lysyl-[protein] + 3 S-adenosyl-L-homocysteine + 3 H(+). Functionally, methylates ribosomal protein L11. This chain is Ribosomal protein L11 methyltransferase, found in Salmonella heidelberg (strain SL476).